The primary structure comprises 28 residues: 3-phytase B (28 aa).

The disordered stretch occupies residues 1-28 (RDPTGCEVDQVIMVKRHGERYPSPSAGK). Histidine 17 acts as the Nucleophile in catalysis.

Belongs to the histidine acid phosphatase family.

The catalysed reaction is 1D-myo-inositol hexakisphosphate + H2O = 1D-myo-inositol 1,2,4,5,6-pentakisphosphate + phosphate. Catalyzes the hydrolysis of inorganic orthophosphate from phytate. The chain is 3-phytase B (phyB) from Aspergillus ficuum.